The primary structure comprises 226 residues: Uridylate kinase (226 aa).

An ATP-binding site is contributed by 6–10; sequence KISGK. Position 43 (Gly43) interacts with UMP. 2 residues coordinate ATP: Gly44 and Arg48. UMP is bound by residues Asp65 and 113-119; that span reads FQPGQST. The ATP site is built by Thr139, Asn140, Tyr145, and Asp148.

It belongs to the UMP kinase family. Homohexamer.

Its subcellular location is the cytoplasm. The enzyme catalyses UMP + ATP = UDP + ADP. The protein operates within pyrimidine metabolism; CTP biosynthesis via de novo pathway; UDP from UMP (UMPK route): step 1/1. Inhibited by UTP. Catalyzes the reversible phosphorylation of UMP to UDP. The sequence is that of Uridylate kinase from Saccharolobus islandicus (strain Y.N.15.51 / Yellowstone #2) (Sulfolobus islandicus).